Reading from the N-terminus, the 298-residue chain is Palmitoyl-protein thioesterase 1 (298 aa).

The signal sequence occupies residues 1 to 16 (MRYFPLLLCLLAITTA). N20 carries N-linked (GlcNAc...) asparagine glycosylation. 3 cysteine pairs are disulfide-bonded: C37–C38, C88–C120, and C144–C151. Residue S107 is the Nucleophile of the active site. D224 is an active-site residue. Residue N250 is glycosylated (N-linked (GlcNAc...) asparagine). The active site involves H280.

Belongs to the palmitoyl-protein thioesterase family.

The catalysed reaction is S-hexadecanoyl-L-cysteinyl-[protein] + H2O = L-cysteinyl-[protein] + hexadecanoate + H(+). Its function is as follows. Removes thioester-linked fatty acyl groups such as palmitate (hexadecanoate) from modified cysteine residues in proteins or peptides. In Caenorhabditis elegans, this protein is Palmitoyl-protein thioesterase 1 (ppt-1).